A 400-amino-acid chain; its full sequence is Aspartate aminotransferase (400 aa).

L-aspartate is bound by residues G37, W126, and N176. K238 carries the post-translational modification N6-(pyridoxal phosphate)lysine. Position 367 (R367) interacts with L-aspartate.

The protein belongs to the class-I pyridoxal-phosphate-dependent aminotransferase family. In terms of assembly, homodimer. Requires pyridoxal 5'-phosphate as cofactor.

Its subcellular location is the cytoplasm. It carries out the reaction L-aspartate + 2-oxoglutarate = oxaloacetate + L-glutamate. Functionally, catalyzes the reversible conversion of aspartate and 2-oxoglutarate to glutamate and oxaloacetate. Has very weak prephenate aminotransferase activity. In Musicola paradisiaca (strain Ech703) (Dickeya paradisiaca), this protein is Aspartate aminotransferase.